The sequence spans 658 residues: DNA ligase (658 aa).

NAD(+) contacts are provided by residues 32–36 and 81–82; these read DAVYD and SL. Residue Lys-112 is the N6-AMP-lysine intermediate of the active site. Residues Arg-133, Glu-167, and Lys-306 each contribute to the NAD(+) site. Residues Cys-400, Cys-403, Cys-416, and Cys-421 each coordinate Zn(2+). Residues 577 to 658 enclose the BRCT domain; it reads ESSSVFNNKT…LKRLKKLDQN (82 aa).

This sequence belongs to the NAD-dependent DNA ligase family. LigA subfamily. Mg(2+) serves as cofactor. It depends on Mn(2+) as a cofactor.

The enzyme catalyses NAD(+) + (deoxyribonucleotide)n-3'-hydroxyl + 5'-phospho-(deoxyribonucleotide)m = (deoxyribonucleotide)n+m + AMP + beta-nicotinamide D-nucleotide.. In terms of biological role, DNA ligase that catalyzes the formation of phosphodiester linkages between 5'-phosphoryl and 3'-hydroxyl groups in double-stranded DNA using NAD as a coenzyme and as the energy source for the reaction. It is essential for DNA replication and repair of damaged DNA. The sequence is that of DNA ligase from Helicobacter pylori (strain G27).